Here is a 346-residue protein sequence, read N- to C-terminus: Short-wave-sensitive opsin 1 (346 aa).

The Extracellular segment spans residues 1-31 (MSGEDDFYLFQNISSVGPWDGPQYHLAPVWA). Asparagine 12 is a glycosylation site (N-linked (GlcNAc...) asparagine). The helical transmembrane segment at 32 to 56 (FRLQAAFMGFVFFVGTPLNAIVLVA) threads the bilayer. At 57-68 (TLHYKKLRQPLN) the chain is on the cytoplasmic side. The chain crosses the membrane as a helical span at residues 69 to 94 (YILVNVSLGGFLFCIFSVFTVFIASC). At 95–108 (HGYFLFGRHVCALE) the chain is on the extracellular side. The cysteines at positions 105 and 182 are disulfide-linked. Residues 109-128 (AFLGSVAGLVTGWSLAFLAF) traverse the membrane as a helical segment. At 129–147 (ERYVVICKPFGSIRFNSKH) the chain is on the cytoplasmic side. A helical membrane pass occupies residues 148-171 (ALMVVLATWIIGIGVSIPPFFGWS). The Extracellular segment spans residues 172–197 (RFIPEGLQCSCGPDWYTVGTKYRSEY). A helical membrane pass occupies residues 198–225 (YTWFLFIFCFIIPLSLICFSYSQLLRTL). The Cytoplasmic portion of the chain corresponds to 226–247 (RAVAAQQQESATTQKAEREVSH). A helical membrane pass occupies residues 248–271 (MVVVMVGSFCLCYVPYAALAMYMV). The Extracellular portion of the chain corresponds to 272–279 (NNRNHGLD). The helical transmembrane segment at 280-304 (LRLVTIPAFFSKSSCVYNPIIYCFM) threads the bilayer. The residue at position 291 (lysine 291) is an N6-(retinylidene)lysine. Over 305-346 (NKQFRACILEMVCRKPMADESDVSGSQKTEVSTVSSSKVGPH) the chain is Cytoplasmic. A disordered region spans residues 324-346 (ESDVSGSQKTEVSTVSSSKVGPH). Over residues 330-346 (SQKTEVSTVSSSKVGPH) the composition is skewed to low complexity.

It belongs to the G-protein coupled receptor 1 family. Opsin subfamily. Phosphorylated on some or all of the serine and threonine residues present in the C-terminal region. Expressed in the inner and outer segments of cone photoreceptor cells in the retina (at protein level).

The protein resides in the cell membrane. The protein localises to the photoreceptor inner segment. It is found in the cell projection. Its subcellular location is the cilium. It localises to the photoreceptor outer segment. The protein resides in the cytoplasm. The protein localises to the perinuclear region. Visual pigments are the light-absorbing molecules that mediate vision. They consist of an apoprotein, opsin, covalently linked to cis-retinal. Required for the maintenance of cone outer segment organization in the ventral retina, but not essential for the maintenance of functioning cone photoreceptors. Involved in ensuring correct abundance and localization of retinal membrane proteins. May increase spectral sensitivity in dim light. This is Short-wave-sensitive opsin 1 (Opn1sw) from Mus musculus (Mouse).